A 231-amino-acid polypeptide reads, in one-letter code: Ribose-5-phosphate isomerase A (231 aa).

Residues 40–43, 93–96, and 106–109 contribute to the substrate site; these read TGST, DGAD, and KGGG. Residue E115 is the Proton acceptor of the active site. K133 lines the substrate pocket.

The protein belongs to the ribose 5-phosphate isomerase family. In terms of assembly, homodimer.

It carries out the reaction aldehydo-D-ribose 5-phosphate = D-ribulose 5-phosphate. It functions in the pathway carbohydrate degradation; pentose phosphate pathway; D-ribose 5-phosphate from D-ribulose 5-phosphate (non-oxidative stage): step 1/1. Catalyzes the reversible conversion of ribose-5-phosphate to ribulose 5-phosphate. The sequence is that of Ribose-5-phosphate isomerase A from Escherichia coli O1:K1 / APEC.